The sequence spans 71 residues: Cytochrome c oxidase subunit 8C, mitochondrial (71 aa).

Residues 1–28 (MAHLPRVCPFIRRLRVALLCLRPGHRFA) constitute a mitochondrion transit peptide. The Mitochondrial matrix portion of the chain corresponds to 29-39 (HSEPQRQRPAS). A helical transmembrane segment spans residues 40–63 (ALEMAVGIVVIFSAFLTPSAYVLS). At 64–71 (NLSQFRRE) the chain is on the mitochondrial intermembrane side.

This sequence belongs to the cytochrome c oxidase VIII family. Component of the cytochrome c oxidase (complex IV, CIV), a multisubunit enzyme composed of 14 subunits. The complex is composed of a catalytic core of 3 subunits MT-CO1, MT-CO2 and MT-CO3, encoded in the mitochondrial DNA, and 11 supernumerary subunits COX4I, COX5A, COX5B, COX6A, COX6B, COX6C, COX7A, COX7B, COX7C, COX8 and NDUFA4, which are encoded in the nuclear genome. The complex exists as a monomer or a dimer and forms supercomplexes (SCs) in the inner mitochondrial membrane with NADH-ubiquinone oxidoreductase (complex I, CI) and ubiquinol-cytochrome c oxidoreductase (cytochrome b-c1 complex, complex III, CIII), resulting in different assemblies (supercomplex SCI(1)III(2)IV(1) and megacomplex MCI(2)III(2)IV(2)).

It is found in the mitochondrion inner membrane. It functions in the pathway energy metabolism; oxidative phosphorylation. Its function is as follows. Component of the cytochrome c oxidase, the last enzyme in the mitochondrial electron transport chain which drives oxidative phosphorylation. The respiratory chain contains 3 multisubunit complexes succinate dehydrogenase (complex II, CII), ubiquinol-cytochrome c oxidoreductase (cytochrome b-c1 complex, complex III, CIII) and cytochrome c oxidase (complex IV, CIV), that cooperate to transfer electrons derived from NADH and succinate to molecular oxygen, creating an electrochemical gradient over the inner membrane that drives transmembrane transport and the ATP synthase. Cytochrome c oxidase is the component of the respiratory chain that catalyzes the reduction of oxygen to water. Electrons originating from reduced cytochrome c in the intermembrane space (IMS) are transferred via the dinuclear copper A center (CU(A)) of subunit 2 and heme A of subunit 1 to the active site in subunit 1, a binuclear center (BNC) formed by heme A3 and copper B (CU(B)). The BNC reduces molecular oxygen to 2 water molecules using 4 electrons from cytochrome c in the IMS and 4 protons from the mitochondrial matrix. The polypeptide is Cytochrome c oxidase subunit 8C, mitochondrial (COX8C) (Eulemur fulvus fulvus (Brown lemur)).